Reading from the N-terminus, the 892-residue chain is Alanine--tRNA ligase (892 aa).

H594, H598, C702, and H706 together coordinate Zn(2+).

The protein belongs to the class-II aminoacyl-tRNA synthetase family. Zn(2+) serves as cofactor.

It is found in the cytoplasm. The enzyme catalyses tRNA(Ala) + L-alanine + ATP = L-alanyl-tRNA(Ala) + AMP + diphosphate. In terms of biological role, catalyzes the attachment of alanine to tRNA(Ala) in a two-step reaction: alanine is first activated by ATP to form Ala-AMP and then transferred to the acceptor end of tRNA(Ala). Also edits incorrectly charged Ser-tRNA(Ala) and Gly-tRNA(Ala) via its editing domain. This Pyrobaculum arsenaticum (strain DSM 13514 / JCM 11321 / PZ6) protein is Alanine--tRNA ligase.